A 179-amino-acid chain; its full sequence is Adenylyl-sulfate kinase (179 aa).

Glycine 13–serine 20 lines the ATP pocket. Serine 87 (phosphoserine intermediate) is an active-site residue.

This sequence belongs to the APS kinase family.

It carries out the reaction adenosine 5'-phosphosulfate + ATP = 3'-phosphoadenylyl sulfate + ADP + H(+). Its pathway is sulfur metabolism; hydrogen sulfide biosynthesis; sulfite from sulfate: step 2/3. In terms of biological role, catalyzes the synthesis of activated sulfate. The sequence is that of Adenylyl-sulfate kinase from Paraburkholderia xenovorans (strain LB400).